A 904-amino-acid polypeptide reads, in one-letter code: DNA polymerase I (904 aa).

Residues 186–279 (TPRQYPDFAA…DTLRLQPWDR (94 aa)) enclose the 5'-3' exonuclease domain. One can recognise a 3'-5' exonuclease domain in the interval 317–493 (RGGALAPGTV…LADALDAELA (177 aa)).

This sequence belongs to the DNA polymerase type-A family. In terms of assembly, single-chain monomer with multiple functions.

It carries out the reaction DNA(n) + a 2'-deoxyribonucleoside 5'-triphosphate = DNA(n+1) + diphosphate. Its function is as follows. In addition to polymerase activity, this DNA polymerase exhibits 3'-5' and 5'-3' exonuclease activity. The polypeptide is DNA polymerase I (polA) (Mycobacterium bovis (strain ATCC BAA-935 / AF2122/97)).